Here is a 451-residue protein sequence, read N- to C-terminus: Chaperone SurA (451 aa).

A signal peptide spans 1–26 (MKKIIPTNLFKLISILFILTPFFAWS). PpiC domains lie at 179–280 (DVEY…QLQG) and 290–388 (KQYH…FLDG).

The protein localises to the periplasm. The catalysed reaction is [protein]-peptidylproline (omega=180) = [protein]-peptidylproline (omega=0). Functionally, chaperone involved in the correct folding and assembly of outer membrane proteins. Recognizes specific patterns of aromatic residues and the orientation of their side chains, which are found more frequently in integral outer membrane proteins. May act in both early periplasmic and late outer membrane-associated steps of protein maturation. In Hydrogenovibrio crunogenus (strain DSM 25203 / XCL-2) (Thiomicrospira crunogena), this protein is Chaperone SurA.